Reading from the N-terminus, the 135-residue chain is Small ribosomal subunit protein uS12 (135 aa).

3-methylthioaspartic acid is present on Asp89. The segment at 108–135 (NKRTVSRSKYGTKKAKATDKKATDSKKK) is disordered. The span at 111-122 (TVSRSKYGTKKA) shows a compositional bias: basic residues. Basic and acidic residues predominate over residues 123–135 (KATDKKATDSKKK).

Belongs to the universal ribosomal protein uS12 family. Part of the 30S ribosomal subunit. Contacts proteins S8 and S17. May interact with IF1 in the 30S initiation complex.

Its function is as follows. With S4 and S5 plays an important role in translational accuracy. In terms of biological role, interacts with and stabilizes bases of the 16S rRNA that are involved in tRNA selection in the A site and with the mRNA backbone. Located at the interface of the 30S and 50S subunits, it traverses the body of the 30S subunit contacting proteins on the other side and probably holding the rRNA structure together. The combined cluster of proteins S8, S12 and S17 appears to hold together the shoulder and platform of the 30S subunit. This is Small ribosomal subunit protein uS12 from Helicobacter pylori (strain HPAG1).